The sequence spans 251 residues: UPF0309 protein GK1441 (251 aa).

The SIS domain occupies 31-214; the sequence is VSEAIQNGGI…VLMAENGIEP (184 aa).

Belongs to the UPF0309 family.

In Geobacillus kaustophilus (strain HTA426), this protein is UPF0309 protein GK1441.